We begin with the raw amino-acid sequence, 1148 residues long: MKLSRQFTVFGSAIFCVVIFSLYLMLDRGHLDYPRGPRQEGSFPQGQLSILQEKIDHLERLLAENNEIISNIRDSVINLSESVEDGPRGPAGNASQGSAHLHSAQLALQADPKDCLFASQSGNQHRDVQMLDVYDLIPFDNPDGGVWKQGFDIKYEADEWDREPLQVFVVPHSHNDPGWLKTFNDYFRDKTQYIFNNMVLKLKEDSSRKFIWSEISYLAKWWDIIDNPKKEAVKSLLQNGQLEIVTGGWVMADEATTHYFALIDQLIEGHQWLEKNLGVKPRSGWAIDPFGHSPTMTYLLKRAGFSHMLIQRVHYSVKKHFSLQKTLEFFWRQNWDLGSTTDILCHMMPFYSYDIPHTCGPDPKICCQFDFKRLPGGRYGCPWGVPPEAISPGNVQSRAQMLLDQYRKKSKLFRTKVLLAPLGDDFRFSEYTEWDLQYRNYEQLFSYMNSQPHLKVKIQFGTLSDYFDALEKSVAAEKKGGQSVFPALSGDFFTYADRDDHYWSGYFTSRPFYKRMDRIMESRLRTAEILYHLALKQAQKYKINKFLSSPHYTTLTEARRNLGLFQHHDAITGTAKDWVVVDYGTRLFQSLNSLEKIIGDSAFLLILKDKKLYQSDPSKAFLEMDTKQSSQDSLPKKNIIQLSAQEPRYLVVYNPFEQERHSVVSVRVNSATVKVLSDLGKAVEVQVSAVWKDMRTTSQAAYEVAFLAHLPPLGLKVYKILESQSSSSHLADYFLYNNDGQAESGIFHMKNMVDSGDAITIENSFLTLGFDRSGLMEKVRRKEDNKQQELKVQFLWYGTTNKRDKSGAYLFLPDGQGQPYVSLRTPFVRVTRGRIYSDVTCFLEHVTHKVRLYHIQGIEGQSMEVSNIVDIRSVHNREIVMRISSKINNQNRYYTDLNGYQIQPRRTMAKLPLQANVYPMSTMAYIQDAAHRLTLLSAQSLGASSMASGQIEVFMDRRLMQDDNRGLGQGVHDNKITANLFRILLEKRNGMNMEEDKKSPVSYPSLLSHMTSAFLNHPFLPMVLSGQLPSPAIELLSEFRLLQSSLPCDIHLVNLRTIQSKVGKGYSDEAALILHRKVFDCQLSSRAMGLPCSTTQGKMSIPKLFNNFAVESFIPSSLSLMHSPPDAQNTSEVSLSPMEISTSRIRLR.

The Cytoplasmic portion of the chain corresponds to 1 to 5; that stretch reads MKLSR. Residues 6–26 form a helical; Signal-anchor for type II membrane protein membrane-spanning segment; it reads QFTVFGSAIFCVVIFSLYLML. Residues 27 to 1148 are Lumenal-facing; it reads DRGHLDYPRG…EISTSRIRLR (1122 aa). Ser-80 and Ser-82 each carry phosphoserine. N-linked (GlcNAc...) asparagine glycosylation occurs at Asn-93. Zn(2+) contacts are provided by His-174, Asp-176, Asp-288, and His-568. The active-site Nucleophile is the Asp-288. The tract at residues 1121-1148 is disordered; the sequence is MHSPPDAQNTSEVSLSPMEISTSRIRLR.

This sequence belongs to the glycosyl hydrolase 38 family. As to quaternary structure, homodimer; disulfide-linked. Zn(2+) serves as cofactor. In terms of processing, glycosylated. Liver.

The protein resides in the golgi apparatus membrane. It catalyses the reaction N(4)-{beta-D-GlcNAc-(1-&gt;2)-alpha-D-Man-(1-&gt;3)-[alpha-D-Man-(1-&gt;3)-[alpha-D-Man-(1-&gt;6)]-alpha-D-Man-(1-&gt;6)]-beta-D-Man-(1-&gt;4)-beta-D-GlcNAc-(1-&gt;4)-beta-D-GlcNAc}-L-asparaginyl-[protein] + 2 H2O = 2 alpha-D-mannopyranose + an N(4)-{beta-D-GlcNAc-(1-&gt;2)-alpha-D-Man-(1-&gt;3)-[alpha-D-Man-(1-&gt;6)]-beta-D-Man-(1-&gt;4)-beta-D-GlcNAc-(1-&gt;4)-beta-D-GlcNAc}-L-asparaginyl-[protein]. It functions in the pathway protein modification; protein glycosylation. Inhibited by swainsonine. Catalyzes the first committed step in the biosynthesis of complex N-glycans. It controls conversion of high mannose to complex N-glycans; the final hydrolytic step in the N-glycan maturation pathway. This is Alpha-mannosidase 2 (Man2a1) from Rattus norvegicus (Rat).